A 753-amino-acid polypeptide reads, in one-letter code: Cytoplasmic polyadenylation element-binding protein 3 (753 aa).

A disordered region spans residues 111–286; sequence VGESTPSSAG…NGSWHGELPP (176 aa). 2 stretches are compositionally biased toward basic and acidic residues: residues 131–142 and 175–188; these read KPTEKISVDEPP and FGKE…EVVK. The span at 227–239 shows a compositional bias: low complexity; that stretch reads SPAKISSNSSSSS. Over residues 265–279 the composition is skewed to polar residues; it reads SRQGLSNRDNLSNGS. The RRM domain maps to 298-320; sequence IFVGGVPWDITEAALKDSFGEFG. The interval 567–589 is disordered; the sequence is KAYAGPHRRPHLTSNSLSKSHGC. Over residues 578-589 the composition is skewed to polar residues; that stretch reads LTSNSLSKSHGC.

In terms of biological role, cytoplasmic polyadenylation element binding protein that binds to and regulates the translation of specific mRNAs. This chain is Cytoplasmic polyadenylation element-binding protein 3 (cpb-3), found in Caenorhabditis briggsae.